The sequence spans 105 residues: UPF0145 protein Ping_0381 (105 aa).

The protein belongs to the UPF0145 family.

The protein is UPF0145 protein Ping_0381 of Psychromonas ingrahamii (strain DSM 17664 / CCUG 51855 / 37).